A 194-amino-acid polypeptide reads, in one-letter code: Methylthioribulose-1-phosphate dehydratase (194 aa).

Residues histidine 84 and histidine 86 each coordinate Zn(2+).

This sequence belongs to the aldolase class II family. MtnB subfamily. Requires Zn(2+) as cofactor.

It carries out the reaction 5-(methylsulfanyl)-D-ribulose 1-phosphate = 5-methylsulfanyl-2,3-dioxopentyl phosphate + H2O. It participates in amino-acid biosynthesis; L-methionine biosynthesis via salvage pathway; L-methionine from S-methyl-5-thio-alpha-D-ribose 1-phosphate: step 2/6. In terms of biological role, catalyzes the dehydration of methylthioribulose-1-phosphate (MTRu-1-P) into 2,3-diketo-5-methylthiopentyl-1-phosphate (DK-MTP-1-P). In Cronobacter sakazakii (Enterobacter sakazakii), this protein is Methylthioribulose-1-phosphate dehydratase.